We begin with the raw amino-acid sequence, 315 residues long: Homocysteine S-methyltransferase YbgG (315 aa).

Residues 2–309 (NPIQHILDTY…ENIQEIAAWA (308 aa)) enclose the Hcy-binding domain. Residues Cys-229, Cys-294, and Cys-295 each coordinate Zn(2+).

Zn(2+) is required as a cofactor.

The enzyme catalyses S-methyl-L-methionine + L-homocysteine = 2 L-methionine + H(+). In Bacillus subtilis (strain 168), this protein is Homocysteine S-methyltransferase YbgG (ybgG).